The chain runs to 547 residues: RING finger protein ETP1 homolog (547 aa).

Residues 208 to 248 (CVVCLERMDSSITGLITIVCQHTFHCPCLQKWGNSSCPVCR) form an RING-type zinc finger. A UBP-type; degenerate zinc finger spans residues 245 to 338 (PVCRYTQKVQ…GKLVELSTDG (94 aa)). 8 residues coordinate Zn(2+): Cys-262, Cys-265, Cys-274, Cys-277, Cys-282, His-289, His-293, and His-299. Residues 514-523 (LPNNSTVRSN) are compositionally biased toward polar residues. Residues 514–547 (LPNNSTVRSNSVKSKKKKKKKPVVPSSSGSLGTD) are disordered. The segment covering 526–535 (KSKKKKKKKP) has biased composition (basic residues).

It is found in the cytoplasm. In terms of biological role, may act as a cytoplasmic retention protein with a role in regulating nuclear transport. The sequence is that of RING finger protein ETP1 homolog from Schizosaccharomyces pombe (strain 972 / ATCC 24843) (Fission yeast).